A 242-amino-acid chain; its full sequence is Carboxy-S-adenosyl-L-methionine synthase (242 aa).

S-adenosyl-L-methionine is bound by residues tyrosine 39, 64–66 (GCS), 89–90 (DN), 117–118 (DI), asparagine 132, and arginine 199.

The protein belongs to the class I-like SAM-binding methyltransferase superfamily. Cx-SAM synthase family. In terms of assembly, homodimer.

It carries out the reaction prephenate + S-adenosyl-L-methionine = carboxy-S-adenosyl-L-methionine + 3-phenylpyruvate + H2O. Catalyzes the conversion of S-adenosyl-L-methionine (SAM) to carboxy-S-adenosyl-L-methionine (Cx-SAM). This chain is Carboxy-S-adenosyl-L-methionine synthase, found in Aliivibrio fischeri (strain ATCC 700601 / ES114) (Vibrio fischeri).